The primary structure comprises 103 residues: Large ribosomal subunit protein bL21 (103 aa).

Belongs to the bacterial ribosomal protein bL21 family. As to quaternary structure, part of the 50S ribosomal subunit. Contacts protein L20.

This protein binds to 23S rRNA in the presence of protein L20. This chain is Large ribosomal subunit protein bL21, found in Aeromonas hydrophila subsp. hydrophila (strain ATCC 7966 / DSM 30187 / BCRC 13018 / CCUG 14551 / JCM 1027 / KCTC 2358 / NCIMB 9240 / NCTC 8049).